Here is a 102-residue protein sequence, read N- to C-terminus: Co-chaperonin GroES (102 aa).

The protein belongs to the GroES chaperonin family. As to quaternary structure, heptamer of 7 subunits arranged in a ring. Interacts with the chaperonin GroEL.

Its subcellular location is the cytoplasm. Together with the chaperonin GroEL, plays an essential role in assisting protein folding. The GroEL-GroES system forms a nano-cage that allows encapsulation of the non-native substrate proteins and provides a physical environment optimized to promote and accelerate protein folding. GroES binds to the apical surface of the GroEL ring, thereby capping the opening of the GroEL channel. This Anabaena sp. (strain L31) protein is Co-chaperonin GroES.